The following is a 277-amino-acid chain: F420-dependent methylenetetrahydromethanopterin dehydrogenase (277 aa).

The protein belongs to the MTD family.

It carries out the reaction 5,10-methylenetetrahydromethanopterin + oxidized coenzyme F420-(gamma-L-Glu)(n) + 2 H(+) = 5,10-methenyl-5,6,7,8-tetrahydromethanopterin + reduced coenzyme F420-(gamma-L-Glu)(n). It participates in one-carbon metabolism; methanogenesis from CO(2); 5,10-methylene-5,6,7,8-tetrahydromethanopterin from 5,10-methenyl-5,6,7,8-tetrahydromethanopterin (coenzyme F420 route): step 1/1. Its function is as follows. Catalyzes the reversible reduction of methenyl-H(4)MPT(+) to methylene-H(4)MPT. The chain is F420-dependent methylenetetrahydromethanopterin dehydrogenase from Methanococcus maripaludis (strain DSM 14266 / JCM 13030 / NBRC 101832 / S2 / LL).